Reading from the N-terminus, the 401-residue chain is CCA-adding enzyme (401 aa).

ATP is bound by residues G32 and R35. CTP is bound by residues G32 and R35. The Mg(2+) site is built by D45 and D47. Positions 116, 159, 162, 165, and 168 each coordinate ATP. 5 residues coordinate CTP: R116, D159, R162, R165, and R168.

This sequence belongs to the tRNA nucleotidyltransferase/poly(A) polymerase family. Bacterial CCA-adding enzyme type 3 subfamily. In terms of assembly, homodimer. Requires Mg(2+) as cofactor.

The enzyme catalyses a tRNA precursor + 2 CTP + ATP = a tRNA with a 3' CCA end + 3 diphosphate. It catalyses the reaction a tRNA with a 3' CCA end + 2 CTP + ATP = a tRNA with a 3' CCACCA end + 3 diphosphate. In terms of biological role, catalyzes the addition and repair of the essential 3'-terminal CCA sequence in tRNAs without using a nucleic acid template. Adds these three nucleotides in the order of C, C, and A to the tRNA nucleotide-73, using CTP and ATP as substrates and producing inorganic pyrophosphate. tRNA 3'-terminal CCA addition is required both for tRNA processing and repair. Also involved in tRNA surveillance by mediating tandem CCA addition to generate a CCACCA at the 3' terminus of unstable tRNAs. While stable tRNAs receive only 3'-terminal CCA, unstable tRNAs are marked with CCACCA and rapidly degraded. The chain is CCA-adding enzyme from Leuconostoc mesenteroides subsp. mesenteroides (strain ATCC 8293 / DSM 20343 / BCRC 11652 / CCM 1803 / JCM 6124 / NCDO 523 / NBRC 100496 / NCIMB 8023 / NCTC 12954 / NRRL B-1118 / 37Y).